A 273-amino-acid chain; its full sequence is Pyrroline-5-carboxylate reductase (273 aa).

Belongs to the pyrroline-5-carboxylate reductase family.

The protein resides in the cytoplasm. It catalyses the reaction L-proline + NADP(+) = (S)-1-pyrroline-5-carboxylate + NADPH + 2 H(+). The catalysed reaction is L-proline + NAD(+) = (S)-1-pyrroline-5-carboxylate + NADH + 2 H(+). It participates in amino-acid biosynthesis; L-proline biosynthesis; L-proline from L-glutamate 5-semialdehyde: step 1/1. In terms of biological role, catalyzes the reduction of 1-pyrroline-5-carboxylate (PCA) to L-proline. The protein is Pyrroline-5-carboxylate reductase of Pseudomonas aeruginosa (strain ATCC 15692 / DSM 22644 / CIP 104116 / JCM 14847 / LMG 12228 / 1C / PRS 101 / PAO1).